A 655-amino-acid chain; its full sequence is Putative phagocytic receptor 1c (655 aa).

The N-terminal stretch at 1–20 (MLNIIVVLLLLFFSNNVIDS) is a signal peptide. A compositionally biased stretch (low complexity) spans 146–173 (SNSKSSEITSPPSSPSSSSSSSSSPSSS). The interval 146–185 (SNSKSSEITSPPSSPSSSSSSSSSPSSSIEEEDDDDTEND) is disordered. A compositionally biased stretch (acidic residues) spans 174-183 (IEEEDDDDTE). The next 9 helical transmembrane spans lie at 300–320 (IDII…AIIL), 359–379 (FSII…LMVF), 387–407 (IATP…TGIF), 428–448 (SVIT…IGYF), 461–481 (IGTV…CSLL), 518–538 (MILG…FFLS), 550–570 (LSFA…NMII), 587–607 (LLGP…FGIT), and 619–639 (FMFS…IGFL).

Belongs to the nonaspanin (TM9SF) (TC 9.A.2) family.

It localises to the membrane. This is Putative phagocytic receptor 1c (phg1c) from Dictyostelium discoideum (Social amoeba).